A 145-amino-acid chain; its full sequence is D-aminoacyl-tRNA deacylase (145 aa).

Residues 137–138 (GP) carry the Gly-cisPro motif, important for rejection of L-amino acids motif.

Belongs to the DTD family. In terms of assembly, homodimer.

Its subcellular location is the cytoplasm. The enzyme catalyses glycyl-tRNA(Ala) + H2O = tRNA(Ala) + glycine + H(+). The catalysed reaction is a D-aminoacyl-tRNA + H2O = a tRNA + a D-alpha-amino acid + H(+). In terms of biological role, an aminoacyl-tRNA editing enzyme that deacylates mischarged D-aminoacyl-tRNAs. Also deacylates mischarged glycyl-tRNA(Ala), protecting cells against glycine mischarging by AlaRS. Acts via tRNA-based rather than protein-based catalysis; rejects L-amino acids rather than detecting D-amino acids in the active site. By recycling D-aminoacyl-tRNA to D-amino acids and free tRNA molecules, this enzyme counteracts the toxicity associated with the formation of D-aminoacyl-tRNA entities in vivo and helps enforce protein L-homochirality. This Lactobacillus delbrueckii subsp. bulgaricus (strain ATCC BAA-365 / Lb-18) protein is D-aminoacyl-tRNA deacylase.